A 483-amino-acid polypeptide reads, in one-letter code: Glycogen synthase (483 aa).

Residue Lys15 participates in ADP-alpha-D-glucose binding.

It belongs to the glycosyltransferase 1 family. Bacterial/plant glycogen synthase subfamily.

The catalysed reaction is [(1-&gt;4)-alpha-D-glucosyl](n) + ADP-alpha-D-glucose = [(1-&gt;4)-alpha-D-glucosyl](n+1) + ADP + H(+). It participates in glycan biosynthesis; glycogen biosynthesis. In terms of biological role, synthesizes alpha-1,4-glucan chains using ADP-glucose. The sequence is that of Glycogen synthase from Thioalkalivibrio sulfidiphilus (strain HL-EbGR7).